A 33-amino-acid polypeptide reads, in one-letter code: Fatty acid-binding protein, intestinal (33 aa).

This sequence belongs to the calycin superfamily. Fatty-acid binding protein (FABP) family. As to expression, intestine.

It is found in the cytoplasm. Functionally, FABPs are thought to play a role in the intracellular transport of long-chain fatty acids and their acyl-CoA esters. In Rhamdia sapo (South American catfish), this protein is Fatty acid-binding protein, intestinal (fabp2).